Here is a 118-residue protein sequence, read N- to C-terminus: Large ribosomal subunit protein uL24 (118 aa).

The protein belongs to the universal ribosomal protein uL24 family. As to quaternary structure, part of the 50S ribosomal subunit.

Functionally, one of two assembly initiator proteins, it binds directly to the 5'-end of the 23S rRNA, where it nucleates assembly of the 50S subunit. Its function is as follows. One of the proteins that surrounds the polypeptide exit tunnel on the outside of the subunit. This Prochlorococcus marinus (strain SARG / CCMP1375 / SS120) protein is Large ribosomal subunit protein uL24.